The primary structure comprises 1790 residues: Protein FAM186A (1790 aa).

Belongs to the FAM186 family.

The protein is Protein FAM186A (FAM186A) of Mus musculus (Mouse).